Reading from the N-terminus, the 270-residue chain is 2-aminoethanethiol dioxygenase (270 aa).

The disordered stretch occupies residues Phe21–Pro48. His112 and His114 together coordinate Fe cation. The disordered stretch occupies residues Gly140–Ala164. Position 193 (His193) interacts with Fe cation. The segment at residues Cys220–Tyr223 is a cross-link (3'-(S-cysteinyl)-tyrosine (Cys-Tyr)).

As to quaternary structure, monomer. Fe cation is required as a cofactor.

The enzyme catalyses cysteamine + O2 = hypotaurine + H(+). It carries out the reaction N-terminal L-cysteinyl-[protein] + O2 = N-terminal S-hydroxy-S-oxy-L-cysteinyl-[protein] + H(+). In terms of biological role, plays a vital role in regulating thiol metabolism and preserving oxygen homeostasis by oxidizing the sulfur of cysteamine and N-terminal cysteine-containing proteins to their corresponding sulfinic acids using O2 as a cosubstrate. Catalyzes the oxidation of cysteamine (2-aminoethanethiol) to hypotaurine. Catalyzes the oxidation of regulators of G-protein signaling 4 (RGS4) and 5 (RGS5) and interleukin-32 (IL32). In Homo sapiens (Human), this protein is 2-aminoethanethiol dioxygenase (ADO).